A 1893-amino-acid chain; its full sequence is Transcription initiation factor TFIID subunit 1 (1893 aa).

The 435-residue stretch at 1-435 folds into the Protein kinase 1 domain; sequence MGPGCDLLLR…VTQLHWEDDI (435 aa). S137 is modified (phosphoserine; by autocatalysis). Disordered regions lie at residues 155 to 184 and 197 to 224; these read LMPP…NGEG and ASEK…AESE. The segment covering 156 to 165 has biased composition (pro residues); sequence MPPPPPPPGP. The span at 197–208 shows a compositional bias: low complexity; that stretch reads ASEKVDFSSSSD. The residue at position 328 (S328) is a Phosphoserine; by autocatalysis. Residues 534–557 are disordered; that stretch reads IPDEKEEATSNSPSKESKKESSLK. The histone acetyltransferase (HAT) stretch occupies residues 538–997; sequence KEEATSNSPS…KIPNKPTQQK (460 aa). Residue K565 is modified to N6-acetyllysine. Glycyl lysine isopeptide (Lys-Gly) (interchain with G-Cter in SUMO2) cross-links involve residues K570 and K583. 4 disordered regions span residues 990–1009, 1128–1148, 1158–1177, and 1254–1278; these read PNKP…KKTV, MLQN…QERK, GSAA…VTSL, and RLKR…MKER. Basic and acidic residues-rich tracts occupy residues 995–1004 and 1139–1148; these read QQKDDKEPQP and SREREEQERK. The HMG box; involved in promoter binding DNA-binding region spans 1216 to 1294; sequence VRIRTTKDEE…CGACGAIGHM (79 aa). The span at 1254 to 1270 shows a compositional bias: basic and acidic residues; it reads RLKRNQEKEKLKGPPEK. The interval 1363–1650 is interaction with ASF1A and ASF1B; sequence VLKFPKQQLP…TAKEAALEEA (288 aa). A Nuclear localization signal motif is present at residues 1372 to 1379; it reads PPKKKRRV. 2 Bromo domains span residues 1397 to 1505 and 1519 to 1628; these read RRRT…LKEK and LLDD…LTEY. Residues 1446 to 1893 enclose the Protein kinase 2 domain; sequence MDLQTLRENV…AGDSDLDSDE (448 aa). The interval 1651–1676 is disordered; the sequence is ELESLDPMTPGPYTPQPPDLYDTNTS. The span at 1659–1668 shows a compositional bias: pro residues; that stretch reads TPGPYTPQPP. Phosphoserine occurs at positions 1690, 1693, 1718, 1721, and 1723. The interval 1696-1893 is disordered; it reads DIPSATPEKQ…AGDSDLDSDE (198 aa). Composition is skewed to acidic residues over residues 1709–1723 and 1741–1756; these read EGED…EEEG and EGED…EEGD. S1799, S1802, and S1820 each carry phosphoserine. Over residues 1830-1840 the composition is skewed to polar residues; that stretch reads KSNTQDTSFSS. Residues 1846 to 1857 show a composition bias toward acidic residues; that stretch reads VSEEEEDEEEEE. S1847 is modified (phosphoserine). The span at 1860–1869 shows a compositional bias: polar residues; sequence SGPSVLSQVH.

Belongs to the TAF1 family. As to quaternary structure, component of the TFIID basal transcription factor complex, composed of TATA-box-binding protein TBP, and a number of TBP-associated factors (TAFs), including TAF1, TAF2, TAF3, TAF4, TAF5, TAF6, TAF7, TAF8, TAF9, TAF10, TAF11, TAF12 and TAF13. Interacts with TAF7; the interaction is direct. TAF1, when part of the TFIID complex, interacts with C-terminus of TP53. Part of a TFIID-containing RNA polymerase II pre-initiation complex that is composed of TBP and at least GTF2A1, GTF2A2, GTF2E1, GTF2E2, GTF2F1, GTF2H2, GTF2H3, GTF2H4, GTF2H5, GTF2B, TCEA1, ERCC2, ERCC3, TAF1, TAF2, TAF3, TAF4, TAF5, TAF6, TAF7, TAF8, TAF9, TAF10, TAF11, TAF12 and TAF13. Component of some MLL1/MLL complex, at least composed of the core components KMT2A/MLL1, ASH2L, HCFC1/HCF1, WDR5 and RBBP5, as well as the facultative components BACC1, CHD8, E2F6, HSP70, INO80C, KANSL1, LAS1L, MAX, MCRS1, MGA, KAT8/MOF, PELP1, PHF20, PRP31, RING2, RUVB1/TIP49A, RUVB2/TIP49B, SENP3, TAF1, TAF4, TAF6, TAF7, TAF9 and TEX10. RB1 interacts with the N-terminal domain of TAF1. Interacts with ASF1A and ASF1B. Interacts (via bromo domains) with acetylated lysine residues on the N-terminus of histone H1.4, H2A, H2B, H3 and H4 (in vitro). In terms of assembly, (Microbial infection) Interacts with SV40 Large T antigen. (Microbial infection) Interacts with herpes simplex virus 1 ICP4. Mg(2+) is required as a cofactor. Post-translationally, phosphorylated by casein kinase II in vitro.

The protein localises to the nucleus. The catalysed reaction is L-seryl-[protein] + ATP = O-phospho-L-seryl-[protein] + ADP + H(+). It catalyses the reaction L-threonyl-[protein] + ATP = O-phospho-L-threonyl-[protein] + ADP + H(+). The enzyme catalyses L-lysyl-[protein] + acetyl-CoA = N(6)-acetyl-L-lysyl-[protein] + CoA + H(+). Its activity is regulated as follows. Autophosphorylates on Ser residues. Inhibited by retinoblastoma tumor suppressor protein, RB1. Binding to TAF7 or CIITA inhibits the histone acetyltransferase activity. The TFIID basal transcription factor complex plays a major role in the initiation of RNA polymerase II (Pol II)-dependent transcription. TFIID recognizes and binds promoters with or without a TATA box via its subunit TBP, a TATA-box-binding protein, and promotes assembly of the pre-initiation complex (PIC). The TFIID complex consists of TBP and TBP-associated factors (TAFs), including TAF1, TAF2, TAF3, TAF4, TAF5, TAF6, TAF7, TAF8, TAF9, TAF10, TAF11, TAF12 and TAF13. TAF1 is the largest component and core scaffold of the TFIID complex, involved in nucleating complex assembly. TAF1 forms a promoter DNA binding subcomplex of TFIID, together with TAF7 and TAF2. Contains novel N- and C-terminal Ser/Thr kinase domains which can autophosphorylate or transphosphorylate other transcription factors. Phosphorylates TP53 on 'Thr-55' which leads to MDM2-mediated degradation of TP53. Phosphorylates GTF2A1 and GTF2F1 on Ser residues. Possesses DNA-binding activity. Essential for progression of the G1 phase of the cell cycle. Exhibits histone acetyltransferase activity towards histones H3 and H4. The protein is Transcription initiation factor TFIID subunit 1 of Homo sapiens (Human).